Reading from the N-terminus, the 966-residue chain is Calsyntenin-2 (966 aa).

Residues 1-20 form the signal peptide; that stretch reads MLPGRLCLVPLLLALGVGSG. Over 21–835 the chain is Extracellular; that stretch reads GGSGDGGDSR…SIQRSSVVPS (815 aa). Cadherin domains are found at residues 46 to 162 and 163 to 282; these read IETS…APTF and KEPA…MPLF. N-linked (GlcNAc...) asparagine glycosylation is found at Asn-58 and Asn-100. N-linked (GlcNAc...) asparagine glycosylation is found at Asn-344, Asn-376, Asn-720, and Asn-733. The helical transmembrane segment at 836–856 threads the bilayer; that stretch reads IATVVIIISVCMLVFVVAMGV. The Cytoplasmic portion of the chain corresponds to 857-966; the sequence is YRVRIAHQHF…NTAGVINIWK (110 aa). A disordered region spans residues 890-966; that stretch reads NPMEKHEGPG…NTAGVINIWK (77 aa). The segment covering 901–916 has biased composition (acidic residues); that stretch reads GEDETTEVEEEEEAEE. A compositionally biased stretch (polar residues) spans 943 to 960; the sequence is QSGTSSQSPERSTWNTAG.

Belongs to the calsyntenin family. Proteolytically processed under normal cellular conditions. A primary zeta-cleavage generates a large extracellular (soluble) N-terminal domain (sAlc) and a short C-terminal transmembrane fragment (CTF1). A secondary cleavage catalyzed by gamma-secretase within the transmembrane domain releases the beta-Alc-gamma chain in the extracellular milieu and produces an intracellular fragment (AlcICD). This processing is strongly suppressed in the tripartite complex formed with APBA2 and APP, which seems to prevent the association with PSEN1. As to expression, restricted to the brain. In the cerebral cortex, found in the somas and neuropil of all layers. Expressed at highest levels in neurons of cortical layers 5 and 6 and, at lower levels, in neurons of the upper layers. Highly expressed in Purkinje cells. Also found in a few scattered interneurons throughout the granule cell layer and occasionally in neurons in the molecular layer (at protein level). Present throughout all cortical layers, highest levels in GABAergic neurons (based on morphology and distribution pattern).

Its subcellular location is the postsynaptic cell membrane. The protein localises to the endoplasmic reticulum membrane. The protein resides in the golgi apparatus membrane. It localises to the cell projection. It is found in the dendrite. Functionally, postsynaptic adhesion molecule that binds to presynaptic neurexins to mediate synapse formation, and which is involved in learning and memory. Promotes synapse development by acting as a cell adhesion molecule at the postsynaptic membrane, which associates with neurexin-alpha at the presynaptic membrane. This is Calsyntenin-2 from Mus musculus (Mouse).